The primary structure comprises 757 residues: Inhibitor of nuclear factor kappa-B kinase subunit beta (757 aa).

One can recognise a Protein kinase domain in the interval 15 to 300 (WEMKERLGTG…DPQYGPNGCF (286 aa)). Residues 21-29 (LGTGGFGNV) and Lys44 each bind ATP. Asp145 (proton acceptor) is an active-site residue. Lys163 is covalently cross-linked (Glycyl lysine isopeptide (Lys-Gly) (interchain with G-Cter in ubiquitin)). Position 177 is a phosphoserine; by TBK1 and PKC/PRKCZ (Ser177). Cys179 carries the S-nitrosocysteine modification. A Phosphoserine; by TBK1, PKC/PRKCZ and PDPK1 modification is found at Ser181. The residue at position 191 (Pro191) is a Hydroxyproline. The leucine-zipper stretch occupies residues 458-479 (LLRNNSCLSKMKNAMASTAQQL). Phosphoserine; by autocatalysis is present on Ser670. The residue at position 672 (Ser672) is a Phosphoserine. Residues Ser675, Ser682, Ser689, Ser692, Ser697, Ser705, Ser733, and Ser740 each carry the phosphoserine; by autocatalysis modification. Residues 683–703 (HPGQLMSQPSSACDSLPESDK) form a disordered region. Residues 737-742 (LDWSWL) form an NEMO-binding region.

This sequence belongs to the protein kinase superfamily. Ser/Thr protein kinase family. I-kappa-B kinase subfamily. As to quaternary structure, component of the I-kappa-B-kinase (IKK) core complex consisting of CHUK, IKBKB and IKBKG; probably four alpha/CHUK-beta/IKBKB dimers are associated with four gamma/IKBKG subunits. The IKK core complex seems to associate with regulatory or adapter proteins to form a IKK-signalosome holo-complex. The IKK complex associates with TERF2IP/RAP1, leading to promote IKK-mediated phosphorylation of RELA/p65. Part of a complex composed of NCOA2, NCOA3, CHUK/IKKA, IKBKB, IKBKG and CREBBP. Part of a 70-90 kDa complex at least consisting of CHUK/IKKA, IKBKB, NFKBIA, RELA, ELP1 and MAP3K14. Found in a membrane raft complex, at least composed of BCL10, CARD11, DPP4 and IKBKB. Interacts with SQSTM1 through PRKCZ or PRKCI. Forms an NGF-induced complex with IKBKB, PRKCI and TRAF6. May interact with MAVS/IPS1. Interacts with NALP2. Interacts with TICAM1. Interacts with FAF1; the interaction disrupts the IKK complex formation. Interacts with ATM. Part of a ternary complex consisting of TANK, IKBKB and IKBKG. Interacts with NIBP; the interaction is direct. Interacts with ARRB1 and ARRB2. Interacts with TRIM21. Interacts with NLRC5; prevents IKBKB phosphorylation and kinase activity. Interacts with PDPK1. Interacts with EIF2AK2/PKR. The phosphorylated form interacts with PPM1A and PPM1B. Interacts with ZNF268 isoform 2; the interaction is further increased in a TNF-alpha-dependent manner. Interacts with IKBKE. Interacts with ZC3H12A. Interacts with AKAP13. Interacts with LRRC14; disrupts IKBKB-IKBKG interaction preventing I-kappa-B-kinase (IKK) core complex formation and leading to a decrease of IKBKB phosphorylation and NF-kappaB activation. Interacts with SASH1. Interacts with ARFIP2. Interacts with FKBP5. Interacts with kinase TBK1; the complex interacts with STAT1, leading to phosphorylation of STAT1 on 'Thr-748' by IKBKB. In terms of processing, upon cytokine stimulation, phosphorylated on Ser-177 and Ser-181 by MEKK1 and/or MAP3K14/NIK as well as TBK1 and PRKCZ; which enhances activity. Phosphorylated by MAP3K7/TAK1 in response to NOD1 and NOD2 signaling, promoting activation and phosphorylation of NF-kappa-B inhibitors, leading to NF-kappa-B activation. Once activated, autophosphorylates on the C-terminal serine cluster; which decreases activity and prevents prolonged activation of the inflammatory response. Phosphorylated by the IKK-related kinases TBK1 and IKBKE, which is associated with reduced CHUK/IKKA and IKBKB activity and NF-kappa-B-dependent gene transcription. Dephosphorylated at Ser-177 and Ser-181 by PPM1A and PPM1B. Post-translationally, ubiquitinated. Monoubiquitination involves TRIM21 that leads to inhibition of Tax-induced NF-kappa-B signaling. 'Ser-163' may not serve as a monoubiquitination site. Ubiquitination on 'Ser-163' may modulate phosphorylation on C-terminal serine residues. Hydroxylated by PHD1/EGLN2, loss of hydroxylation under hypoxic conditions results in activation of NF-kappa-B. In terms of tissue distribution, detected in heart (at protein level). Expressed in liver, kidney and spleen.

Its subcellular location is the cytoplasm. The protein resides in the nucleus. It is found in the membrane raft. The catalysed reaction is L-seryl-[I-kappa-B protein] + ATP = O-phospho-L-seryl-[I-kappa-B protein] + ADP + H(+). The enzyme catalyses L-seryl-[protein] + ATP = O-phospho-L-seryl-[protein] + ADP + H(+). It carries out the reaction L-threonyl-[protein] + ATP = O-phospho-L-threonyl-[protein] + ADP + H(+). Its function is as follows. Serine kinase that plays an essential role in the NF-kappa-B signaling pathway which is activated by multiple stimuli such as inflammatory cytokines, bacterial or viral products, DNA damages or other cellular stresses. Acts as a part of the canonical IKK complex in the conventional pathway of NF-kappa-B activation. Phosphorylates inhibitors of NF-kappa-B on 2 critical serine residues. These modifications allow polyubiquitination of the inhibitors and subsequent degradation by the proteasome. In turn, free NF-kappa-B is translocated into the nucleus and activates the transcription of hundreds of genes involved in immune response, growth control, or protection against apoptosis. In addition to the NF-kappa-B inhibitors, phosphorylates several other components of the signaling pathway including NEMO/IKBKG, NF-kappa-B subunits RELA and NFKB1, as well as IKK-related kinases TBK1 and IKBKE. IKK-related kinase phosphorylations may prevent the overproduction of inflammatory mediators since they exert a negative regulation on canonical IKKs. Phosphorylates FOXO3, mediating the TNF-dependent inactivation of this pro-apoptotic transcription factor. Also phosphorylates other substrates including NAA10, NCOA3, BCL10 and IRS1. Phosphorylates RIPK1 at 'Ser-25' which represses its kinase activity and consequently prevents TNF-mediated RIPK1-dependent cell death. Phosphorylates the C-terminus of IRF5, stimulating IRF5 homodimerization and translocation into the nucleus. Following bacterial lipopolysaccharide (LPS)-induced TLR4 endocytosis, phosphorylates STAT1 at 'Thr-748' which restricts interferon signaling and anti-inflammatory responses and promotes innate inflammatory responses. IKBKB-mediated phosphorylation of STAT1 at 'Thr-748' promotes binding of STAT1 to the ARID5A promoter, resulting in transcriptional activation of ARID5A and subsequent ARID5A-mediated stabilization of IL6. It also promotes binding of STAT1 to the IL12B promoter and activation of IL12B transcription. The chain is Inhibitor of nuclear factor kappa-B kinase subunit beta (Ikbkb) from Mus musculus (Mouse).